Consider the following 368-residue polypeptide: UDP-N-acetylglucosamine--N-acetylmuramyl-(pentapeptide) pyrophosphoryl-undecaprenol N-acetylglucosamine transferase (368 aa).

UDP-N-acetyl-alpha-D-glucosamine contacts are provided by residues 13–15 (TGG), Asn127, Arg168, Ser200, Ile254, and Gln299.

The protein belongs to the glycosyltransferase 28 family. MurG subfamily.

It is found in the cell inner membrane. The enzyme catalyses di-trans,octa-cis-undecaprenyl diphospho-N-acetyl-alpha-D-muramoyl-L-alanyl-D-glutamyl-meso-2,6-diaminopimeloyl-D-alanyl-D-alanine + UDP-N-acetyl-alpha-D-glucosamine = di-trans,octa-cis-undecaprenyl diphospho-[N-acetyl-alpha-D-glucosaminyl-(1-&gt;4)]-N-acetyl-alpha-D-muramoyl-L-alanyl-D-glutamyl-meso-2,6-diaminopimeloyl-D-alanyl-D-alanine + UDP + H(+). The protein operates within cell wall biogenesis; peptidoglycan biosynthesis. Its function is as follows. Cell wall formation. Catalyzes the transfer of a GlcNAc subunit on undecaprenyl-pyrophosphoryl-MurNAc-pentapeptide (lipid intermediate I) to form undecaprenyl-pyrophosphoryl-MurNAc-(pentapeptide)GlcNAc (lipid intermediate II). The sequence is that of UDP-N-acetylglucosamine--N-acetylmuramyl-(pentapeptide) pyrophosphoryl-undecaprenol N-acetylglucosamine transferase from Parabacteroides distasonis (strain ATCC 8503 / DSM 20701 / CIP 104284 / JCM 5825 / NCTC 11152).